Consider the following 238-residue polypeptide: ATP synthase subunit a (238 aa).

The next 6 membrane-spanning stretches (helical) occupy residues 18–38 (TTNL…VFAL), 76–96 (FGLY…IGLF), 114–134 (PIVT…SGVA), 150–170 (FKVW…TLGL), 188–208 (GIAF…ALIW), and 211–231 (FSVF…SVYI).

Belongs to the ATPase A chain family. In terms of assembly, F-type ATPases have 2 components, CF(1) - the catalytic core - and CF(0) - the membrane proton channel. CF(1) has five subunits: alpha(3), beta(3), gamma(1), delta(1), epsilon(1). CF(0) has three main subunits: a(1), b(2) and c(9-12). The alpha and beta chains form an alternating ring which encloses part of the gamma chain. CF(1) is attached to CF(0) by a central stalk formed by the gamma and epsilon chains, while a peripheral stalk is formed by the delta and b chains.

The protein resides in the cell membrane. Key component of the proton channel; it plays a direct role in the translocation of protons across the membrane. The chain is ATP synthase subunit a from Pediococcus pentosaceus (strain ATCC 25745 / CCUG 21536 / LMG 10740 / 183-1w).